We begin with the raw amino-acid sequence, 1302 residues long: Ubiquitin conjugation factor E4 B (1302 aa).

Position 1 is an N-acetylmethionine (Met1). The disordered stretch occupies residues 1–155 (MEELSADEIR…EPSSGPEVSE (155 aa)). Positions 16 to 33 (RLAGGQTSQPTTPLTSPQ) are enriched in low complexity. 2 positions are modified to phosphoserine: Ser23 and Ser31. The segment covering 51–64 (QSLGLNVHNMTPAT) has biased composition (polar residues). Residues 76-99 (SQSSEGVSSLSSSPSNSLETQSQS) are compositionally biased toward low complexity. 7 positions are modified to phosphoserine: Ser84, Ser88, Ser90, Ser101, Ser103, Ser105, and Ser124. A compositionally biased stretch (basic and acidic residues) spans 134 to 147 (NDRREKRSLSDKEP). Ser238 carries the phosphoserine modification. A compositionally biased stretch (polar residues) spans 299-327 (AASQLAVPSTPLSPHSAASGTAAGSQPSS). The disordered stretch occupies residues 299–406 (AASQLAVPST…SPSLGASGGA (108 aa)). A compositionally biased stretch (low complexity) spans 340–374 (ASSGVSILSSSPSPPALASSPQAVPASSSRQRPSS). Phosphoserine is present on Ser383. Low complexity predominate over residues 384 to 400 (PSATSRRPSSLRISPSL). Residues Ser803 and Ser969 each carry the phosphoserine modification. Positions 1057–1077 (NKEQWDQLPRDQQQARQSQLA) are disordered. Residues 1066–1077 (RDQQQARQSQLA) are compositionally biased toward low complexity. The U-box domain maps to 1227-1300 (DAPDEFRDPL…QAWMREKQNS (74 aa)). Phosphoserine is present on Ser1265.

Belongs to the ubiquitin conjugation factor E4 family. As to quaternary structure, interacts with VCP/p97. Interacts with STUB1/CHIP and UNC45B. Post-translationally, proteolytically cleaved by caspases during apoptosis. Cleaved efficiently at Asp-123 by caspase-6 and granzyme B. Cleaved with approximately 10-fold less efficiency at Asp-109 by caspase-3 and caspase-7. In terms of tissue distribution, expressed in differentiated myotubes (at protein level). Highest expression in ovary, testis, heart and skeletal muscle. Expression is low in colon, thymus and peripheral blood leukocytes. Almost undetectable in lung and spleen.

The protein localises to the cytoplasm. It localises to the nucleus. It catalyses the reaction S-ubiquitinyl-[E2 ubiquitin-conjugating enzyme]-L-cysteine + [acceptor protein]-L-lysine = [E2 ubiquitin-conjugating enzyme]-L-cysteine + N(6)-ubiquitinyl-[acceptor protein]-L-lysine.. It functions in the pathway protein modification; protein ubiquitination. Its function is as follows. Ubiquitin-protein ligase that probably functions as an E3 ligase in conjunction with specific E1 and E2 ligases. May also function as an E4 ligase mediating the assembly of polyubiquitin chains on substrates ubiquitinated by another E3 ubiquitin ligase. May regulate myosin assembly in striated muscles together with STUB1 and VCP/p97 by targeting myosin chaperone UNC45B for proteasomal degradation. The sequence is that of Ubiquitin conjugation factor E4 B from Homo sapiens (Human).